The sequence spans 356 residues: Dihydroorotate dehydrogenase (quinone) (356 aa).

FMN contacts are provided by residues 67-71 (AGFDK) and threonine 91. Residue lysine 71 coordinates substrate. Residue 116-120 (NRMGF) participates in substrate binding. Positions 153 and 186 each coordinate FMN. Asparagine 186 is a substrate binding site. Residue serine 189 is the Nucleophile of the active site. Residue asparagine 191 participates in substrate binding. The FMN site is built by lysine 228 and threonine 256. 257-258 (NT) serves as a coordination point for substrate. Residues glycine 282, glycine 311, and 332–333 (YT) each bind FMN.

Belongs to the dihydroorotate dehydrogenase family. Type 2 subfamily. As to quaternary structure, monomer. Requires FMN as cofactor.

Its subcellular location is the cell membrane. The enzyme catalyses (S)-dihydroorotate + a quinone = orotate + a quinol. The protein operates within pyrimidine metabolism; UMP biosynthesis via de novo pathway; orotate from (S)-dihydroorotate (quinone route): step 1/1. Catalyzes the conversion of dihydroorotate to orotate with quinone as electron acceptor. This Pseudarthrobacter chlorophenolicus (strain ATCC 700700 / DSM 12829 / CIP 107037 / JCM 12360 / KCTC 9906 / NCIMB 13794 / A6) (Arthrobacter chlorophenolicus) protein is Dihydroorotate dehydrogenase (quinone).